The primary structure comprises 333 residues: Ribokinase (333 aa).

Substrate-binding positions include 10 to 12 (NYD), 38 to 42 (GKGLN), and glutamate 149. Residues asparagine 193 and 248–253 (TLGSRG) each bind ATP. Aspartate 277 and threonine 279 together coordinate K(+). 282 to 283 (GD) provides a ligand contact to ATP. Aspartate 283 provides a ligand contact to substrate. The Proton acceptor role is filled by aspartate 283. Residues threonine 313, arginine 316, glycine 318, and serine 322 each coordinate K(+).

The protein belongs to the carbohydrate kinase PfkB family. Ribokinase subfamily. Homodimer. The cofactor is Mg(2+).

It localises to the cytoplasm. Its subcellular location is the nucleus. It carries out the reaction D-ribose + ATP = D-ribose 5-phosphate + ADP + H(+). The protein operates within carbohydrate metabolism; D-ribose degradation; D-ribose 5-phosphate from beta-D-ribopyranose: step 2/2. Activated by a monovalent cation that binds near, but not in, the active site. The most likely occupant of the site in vivo is potassium. Ion binding induces a conformational change that may alter substrate affinity. Catalyzes the phosphorylation of ribose at O-5 in a reaction requiring ATP and magnesium. The resulting D-ribose-5-phosphate can then be used either for sythesis of nucleotides, histidine, and tryptophan, or as a component of the pentose phosphate pathway. In Saccharomyces cerevisiae (strain ATCC 204508 / S288c) (Baker's yeast), this protein is Ribokinase.